The following is a 294-amino-acid chain: DNA adenine methyltransferase YhdJ (294 aa).

Residues 275–294 (TGNLSKRSRLSEVDPDLITK) form a disordered region. A compositionally biased stretch (basic and acidic residues) spans 283 to 294 (RLSEVDPDLITK).

Belongs to the N(4)/N(6)-methyltransferase family.

The catalysed reaction is a 2'-deoxyadenosine in DNA + S-adenosyl-L-methionine = an N(6)-methyl-2'-deoxyadenosine in DNA + S-adenosyl-L-homocysteine + H(+). Its function is as follows. A beta subtype methylase, recognizes the double-stranded sequence 5'-ATGCAT-3' and methylates A-5. This chain is DNA adenine methyltransferase YhdJ (yhdJ), found in Escherichia coli (strain K12).